We begin with the raw amino-acid sequence, 414 residues long: Gamma-glutamyl phosphate reductase (414 aa).

It belongs to the gamma-glutamyl phosphate reductase family.

Its subcellular location is the cytoplasm. It catalyses the reaction L-glutamate 5-semialdehyde + phosphate + NADP(+) = L-glutamyl 5-phosphate + NADPH + H(+). It functions in the pathway amino-acid biosynthesis; L-proline biosynthesis; L-glutamate 5-semialdehyde from L-glutamate: step 2/2. In terms of biological role, catalyzes the NADPH-dependent reduction of L-glutamate 5-phosphate into L-glutamate 5-semialdehyde and phosphate. The product spontaneously undergoes cyclization to form 1-pyrroline-5-carboxylate. This Xanthomonas axonopodis pv. citri (strain 306) protein is Gamma-glutamyl phosphate reductase.